A 134-amino-acid chain; its full sequence is Phosphoribosyl-AMP cyclohydrolase (134 aa).

Aspartate 93 contributes to the Mg(2+) binding site. Cysteine 94 serves as a coordination point for Zn(2+). The Mg(2+) site is built by aspartate 95 and aspartate 97. Zn(2+) contacts are provided by cysteine 112 and cysteine 119.

The protein belongs to the PRA-CH family. In terms of assembly, homodimer. Mg(2+) serves as cofactor. Zn(2+) is required as a cofactor.

The protein localises to the cytoplasm. The catalysed reaction is 1-(5-phospho-beta-D-ribosyl)-5'-AMP + H2O = 1-(5-phospho-beta-D-ribosyl)-5-[(5-phospho-beta-D-ribosylamino)methylideneamino]imidazole-4-carboxamide. The protein operates within amino-acid biosynthesis; L-histidine biosynthesis; L-histidine from 5-phospho-alpha-D-ribose 1-diphosphate: step 3/9. Functionally, catalyzes the hydrolysis of the adenine ring of phosphoribosyl-AMP. This is Phosphoribosyl-AMP cyclohydrolase from Caulobacter sp. (strain K31).